A 386-amino-acid chain; its full sequence is Circumsporozoite protein (386 aa).

An N-terminal signal peptide occupies residues 1–22; sequence MKNFILLAVSSILLVDLFPTHC. Positions 51-304 are disordered; sequence HVGQSASRGR…NEGANAPNEK (254 aa). Basic and acidic residues predominate over residues 72–100; that stretch reads DAKKKKDGKKAEPKNPRENKLKQPGDRAD. The tract at residues 80–88 is required for the binding to heparan sulfate proteoglycans (HSPGs) on the surface of host hepatocytes; that stretch reads KKAEPKNPR. A region I; contains the proteolytic cleavage site region spans residues 91–95; that stretch reads KLKQP. 20 tandem repeats follow at residues 96-104, 105-113, 114-122, 123-131, 132-140, 141-149, 150-158, 159-167, 168-176, 177-185, 186-194, 195-203, 204-212, 213-221, 222-230, 231-239, 240-248, 249-257, 258-266, and 267-275. Residues 96–275 are 20 X 9 AA tandem repeats of G-D-R-A-[AD]-G-Q-P-A; it reads GDRADGQPAG…AGDRAAGQPA (180 aa). Positions 275-292 are enriched in gly residues; the sequence is AGNGAGGQAAGGNAGGQG. Residues 293–303 show a composition bias toward low complexity; it reads QNNEGANAPNE. A TSP type-1 domain is found at 312 to 364; the sequence is KVRATVGTEWTPCSVTCGVGVRVRRRVNAANKKPEDLTLNDLETDVCTMDKCA. 2 disulfide bridges follow: C324/C358 and C328/C363. An O-linked (Fuc) threonine glycan is attached at T327. C363 carries the GPI-anchor amidated cysteine lipid modification. Residues 364–386 constitute a propeptide, removed in mature form; the sequence is AGIFNVVSNSLGLVILLVLALFN.

Belongs to the plasmodium circumsporozoite protein family. Post-translationally, during host cell invasion, proteolytically cleaved at the cell membrane in the region I by a papain-like cysteine protease of parasite origin. Cleavage is triggered by the sporozoite contact with highly sulfated heparan sulfate proteoglycans (HSPGs) present on the host hepatocyte cell surface. Cleavage exposes the TSP type-1 (TSR) domain and is required for productive invasion of host hepatocytes but not for adhesion to the host cell membrane. Cleavage is dispensable for sporozoite development in the oocyst, motility and for traversal of host and vector cells. O-glycosylated; maybe by POFUT2.

It is found in the cell membrane. It localises to the cytoplasm. In terms of biological role, essential sporozoite protein. In the mosquito vector, required for sporozoite development in the oocyst, migration through the vector hemolymph and entry into the vector salivary glands. In the vertebrate host, required for sporozoite migration through the host dermis and infection of host hepatocytes. Binds to highly sulfated heparan sulfate proteoglycans (HSPGs) on the surface of host hepatocytes. Its function is as follows. In the vertebrate host, binds to highly sulfated heparan sulfate proteoglycans (HSPGs) on the surface of host hepatocytes and is required for sporozoite invasion of the host hepatocytes. This chain is Circumsporozoite protein, found in Plasmodium simium.